Consider the following 423-residue polypeptide: Serine hydroxymethyltransferase (423 aa).

Residue 121 to 123 (GHI) participates in (6S)-5,6,7,8-tetrahydrofolate binding. The residue at position 227 (K227) is an N6-(pyridoxal phosphate)lysine. Residue E242 participates in (6S)-5,6,7,8-tetrahydrofolate binding.

It belongs to the SHMT family. Homodimer. It depends on pyridoxal 5'-phosphate as a cofactor.

The protein resides in the cytoplasm. The catalysed reaction is 5,10-methylenetetrahydromethanopterin + glycine + H2O = 5,6,7,8-tetrahydromethanopterin + L-serine. Its pathway is amino-acid biosynthesis; glycine biosynthesis; glycine from L-serine: step 1/1. Its function is as follows. Catalyzes the reversible interconversion of serine and glycine with tetrahydromethanopterin (H4MPT) serving as the one-carbon carrier. Cannot use tetrahydrofolate (THF or H4PteGlu) instead of H4MPT as the pteridine substrate. Also probably exhibits a pteridine-independent aldolase activity toward beta-hydroxyamino acids, producing glycine and aldehydes, via a retro-aldol mechanism. The chain is Serine hydroxymethyltransferase from Methanothermobacter thermautotrophicus (strain ATCC 29096 / DSM 1053 / JCM 10044 / NBRC 100330 / Delta H) (Methanobacterium thermoautotrophicum).